A 388-amino-acid chain; its full sequence is Succinate--CoA ligase [ADP-forming] subunit beta (388 aa).

Positions 9 to 245 (KELLASYGLP…KSQENERELK (237 aa)) constitute an ATP-grasp domain. Residues K46, 53–55 (GRG), E100, Y103, and E108 each bind ATP. The Mg(2+) site is built by N200 and D214. Residues N265 and 322–324 (GIV) each bind substrate.

It belongs to the succinate/malate CoA ligase beta subunit family. Heterotetramer of two alpha and two beta subunits. It depends on Mg(2+) as a cofactor.

It carries out the reaction succinate + ATP + CoA = succinyl-CoA + ADP + phosphate. The enzyme catalyses GTP + succinate + CoA = succinyl-CoA + GDP + phosphate. The protein operates within carbohydrate metabolism; tricarboxylic acid cycle; succinate from succinyl-CoA (ligase route): step 1/1. Functionally, succinyl-CoA synthetase functions in the citric acid cycle (TCA), coupling the hydrolysis of succinyl-CoA to the synthesis of either ATP or GTP and thus represents the only step of substrate-level phosphorylation in the TCA. The beta subunit provides nucleotide specificity of the enzyme and binds the substrate succinate, while the binding sites for coenzyme A and phosphate are found in the alpha subunit. This is Succinate--CoA ligase [ADP-forming] subunit beta from Neisseria gonorrhoeae (strain NCCP11945).